We begin with the raw amino-acid sequence, 338 residues long: Flap endonuclease 1 (338 aa).

The N-domain stretch occupies residues 1 to 98; it reads MGTDIGDLLQ…ETLNRRKEVR (98 aa). Mg(2+)-binding residues include aspartate 27, aspartate 80, glutamate 152, glutamate 154, aspartate 173, aspartate 175, and aspartate 236. Residues 116-257 form an I-domain region; the sequence is AAYKYAQASS…TALKLIKKHG (142 aa). The interval 330-338 is interaction with PCNA; the sequence is RQQTLDQWF.

The protein belongs to the XPG/RAD2 endonuclease family. FEN1 subfamily. Interacts with PCNA. PCNA stimulates the nuclease activity without altering cleavage specificity. Requires Mg(2+) as cofactor.

Structure-specific nuclease with 5'-flap endonuclease and 5'-3' exonuclease activities involved in DNA replication and repair. During DNA replication, cleaves the 5'-overhanging flap structure that is generated by displacement synthesis when DNA polymerase encounters the 5'-end of a downstream Okazaki fragment. Binds the unpaired 3'-DNA end and kinks the DNA to facilitate 5' cleavage specificity. Cleaves one nucleotide into the double-stranded DNA from the junction in flap DNA, leaving a nick for ligation. Also involved in the base excision repair (BER) pathway. Acts as a genome stabilization factor that prevents flaps from equilibrating into structures that lead to duplications and deletions. Also possesses 5'-3' exonuclease activity on nicked or gapped double-stranded DNA. This chain is Flap endonuclease 1, found in Methanosarcina barkeri (strain Fusaro / DSM 804).